The primary structure comprises 178 residues: ATP-dependent protease subunit HslV (178 aa).

Residue Thr-7 is part of the active site. Na(+) contacts are provided by Gly-162, Cys-165, and Thr-168.

Belongs to the peptidase T1B family. HslV subfamily. As to quaternary structure, a double ring-shaped homohexamer of HslV is capped on each side by a ring-shaped HslU homohexamer. The assembly of the HslU/HslV complex is dependent on binding of ATP.

Its subcellular location is the cytoplasm. The enzyme catalyses ATP-dependent cleavage of peptide bonds with broad specificity.. Allosterically activated by HslU binding. In terms of biological role, protease subunit of a proteasome-like degradation complex believed to be a general protein degrading machinery. The chain is ATP-dependent protease subunit HslV from Burkholderia ambifaria (strain ATCC BAA-244 / DSM 16087 / CCUG 44356 / LMG 19182 / AMMD) (Burkholderia cepacia (strain AMMD)).